A 301-amino-acid chain; its full sequence is Envoplakin-like protein (301 aa).

The stretch at 1–88 (MQASADQVER…ERVTQECAEY (88 aa)) forms a coiled coil. Disordered stretches follow at residues 18–41 (RLQQ…TGSS) and 118–166 (GLRR…PEPI). Over residues 26 to 41 (SEQSQALQHQQETGSS) the composition is skewed to polar residues. Residues 136-151 (GAQHRAEGDQRPRRAA) show a composition bias toward basic and acidic residues.

The protein belongs to the plakin or cytolinker family.

The sequence is that of Envoplakin-like protein (EVPLL) from Homo sapiens (Human).